The following is a 367-amino-acid chain: MKKKIRVLVVDDSAFMRRCLKDILENEEDMEVIDTARDGNEAVKKAVELRPDVITLDINMPVMDGLTALQYIMSLAPCPVVIISSLSTEGALTTFEALELGAVDFVAKPGGTVSLGIKQLADEIVSKVRIAALSNKELLSSSRNFKKLLKRRNQEVTRKVYENKISKKEIVVVIGVSTGGPKTLMEILPYLPSDFPAAVLVVQHMPPGFTQSFAQRLDQSCNLKVKEAEDKAFIEPGTVIIAKGGWHLVVERDSRSSKLITRLTQKPEETLYKPSINVTMKSVLENVDGRNIIGILLTGMGDDGADMMVEIRKRGGLTIAESQETAIVYGMPRAAVERGGAEIVAPAYKISDILLKKVNEYARTSEY.

Positions 6–123 (RVLVVDDSAF…SLGIKQLADE (118 aa)) constitute a Response regulatory domain. D57 bears the 4-aspartylphosphate mark. A CheB-type methylesterase domain is found at 165 to 361 (ISKKEIVVVI…DILLKKVNEY (197 aa)). Residues S177, H204, and D303 contribute to the active site.

Belongs to the CheB family. Phosphorylated by CheA. Phosphorylation of the N-terminal regulatory domain activates the methylesterase activity.

The protein resides in the cytoplasm. It carries out the reaction [protein]-L-glutamate 5-O-methyl ester + H2O = L-glutamyl-[protein] + methanol + H(+). It catalyses the reaction L-glutaminyl-[protein] + H2O = L-glutamyl-[protein] + NH4(+). Involved in chemotaxis. Part of a chemotaxis signal transduction system that modulates chemotaxis in response to various stimuli. Catalyzes the demethylation of specific methylglutamate residues introduced into the chemoreceptors (methyl-accepting chemotaxis proteins or MCP) by CheR. Also mediates the irreversible deamidation of specific glutamine residues to glutamic acid. The protein is Protein-glutamate methylesterase/protein-glutamine glutaminase of Caldanaerobacter subterraneus subsp. tengcongensis (strain DSM 15242 / JCM 11007 / NBRC 100824 / MB4) (Thermoanaerobacter tengcongensis).